The chain runs to 655 residues: Sphingomyelin phosphodiesterase 3 (655 aa).

The Cytoplasmic segment spans residues 1-10 (MVLYTTPFPN). An intramembrane region (helical) is located at residues 11 to 31 (SCLSALHCVSWALIFPCYWLV). Residues 32-64 (DRLAASFIPTTYEKRQRADDPCCLQLLCTALFT) lie on the Cytoplasmic side of the membrane. 3 S-palmitoyl cysteine lipidation sites follow: Cys-53, Cys-54, and Cys-59. Residues 65–85 (PIYLALLVASLPFAFLGFLFW) constitute an intramembrane region (helical). Residues 86-655 (SPLQSARRPY…LMVSSGEEEA (570 aa)) are Cytoplasmic-facing. Ser-178 carries the phosphoserine modification. The tract at residues 210–319 (VEYKGDGGRH…DTSASGEPGA (110 aa)) is disordered. Basic and acidic residues-rich tracts occupy residues 212-222 (YKGDGGRHPGD) and 248-257 (GGEEGGRPPE). Residues 279–299 (TPNHNQQDGDSGSLGSPSASR) show a composition bias toward polar residues. Ser-291 bears the Phosphoserine mark. A Mg(2+)-binding site is contributed by Glu-364. S-palmitoyl cysteine attachment occurs at residues Cys-397 and Cys-398. His-639 serves as the catalytic Proton acceptor.

The protein belongs to the neutral sphingomyelinase family. Requires Mg(2+) as cofactor. Post-translationally, palmitoylated, palmitoylation-deficient proteins are targeted for lysosomal degradation. As to expression, predominantly expressed in brain.

Its subcellular location is the golgi apparatus membrane. The protein resides in the cell membrane. The enzyme catalyses a sphingomyelin + H2O = phosphocholine + an N-acylsphing-4-enine + H(+). The catalysed reaction is N-(15Z-tetracosenoyl)sphing-4-enine-1-phosphocholine + H2O = N-(15Z-tetracosenoyl)-sphing-4-enine + phosphocholine + H(+). It carries out the reaction N-(tetracosanoyl)-sphing-4-enine-1-phosphocholine + H2O = N-tetracosanoyl-sphing-4-enine + phosphocholine + H(+). It catalyses the reaction an N-(acyl)-sphingosylphosphocholine + H2O = an N-acyl-sphingoid base + phosphocholine + H(+). The enzyme catalyses 1-hexadecanoyl-sn-glycero-3-phosphocholine + H2O = 1-hexadecanoyl-sn-glycerol + phosphocholine + H(+). The catalysed reaction is 1-O-octadecyl-sn-glycero-3-phosphocholine + H2O = 1-O-octadecyl-sn-glycerol + phosphocholine + H(+). It carries out the reaction a sphingosylphosphocholine + H2O = a sphingoid base + phosphocholine + H(+). It catalyses the reaction N-(hexadecanoyl)-sphing-4-enine-1-phosphocholine + H2O = N-hexadecanoylsphing-4-enine + phosphocholine + H(+). The protein operates within lipid metabolism; sphingolipid metabolism. With respect to regulation, inhibited by nSMase inhibitor GW4869. Binding of anionic phospholipids (APLs) such as phosphatidylserine (PS) and phosphatidic acid (PA) increases enzymatic activity. Functionally, catalyzes the hydrolysis of sphingomyelin to form ceramide and phosphocholine. Ceramide mediates numerous cellular functions, such as apoptosis and growth arrest, and is capable of regulating these 2 cellular events independently. Also hydrolyzes sphingosylphosphocholine. Regulates the cell cycle by acting as a growth suppressor in confluent cells. Probably acts as a regulator of postnatal development and participates in bone and dentin mineralization. Binds to anionic phospholipids (APLs) such as phosphatidylserine (PS) and phosphatidic acid (PA) that modulate enzymatic activity and subcellular location. May be involved in IL-1-beta-induced JNK activation in hepatocytes. May act as a mediator in transcriptional regulation of NOS2/iNOS via the NF-kappa-B activation under inflammatory conditions. The sequence is that of Sphingomyelin phosphodiesterase 3 from Homo sapiens (Human).